The following is a 231-amino-acid chain: uncharacterized protein (231 aa).

The region spanning 4–116 is the Response regulatory domain; that stretch reads RILVVEDDED…ELHARVIAQL (113 aa). 4-aspartylphosphate is present on Asp52. Residues 129–230 constitute a DNA-binding region (ompR/PhoB-type); that stretch reads EETFLIGGKL…EWGRGYRFGA (102 aa).

In terms of processing, phosphorylated by YrkQ.

Its subcellular location is the cytoplasm. In terms of biological role, member of the two-component regulatory system YrkQ/YrkP. This is an uncharacterized protein from Bacillus subtilis (strain 168).